The sequence spans 1252 residues: MGAKRVTVRGARTSPIHRMSSLTPLLLMGMLTSGLAESPVPTSAPRGFWALSENLTAVEGTTVKLWCGVRAPGSVVQWAKDGLLLGPNPKMPGFPRYSLEGDRAKGEFHLLIEACDLSDDAEYECQVGRSELGPELVSPKVILSILVSPKVLLLTPEAGSTVTWVAGQEYVVTCVSGDAKPAPDITFIQSGRTILDVSSNVNEGSEEKLCITEAEARVIPQSSDNGQLLVCEGSNPALDTPIKASFTMNILFPPGPPVIDWPGLNEGHVRAGENLELPCTARGGNPPATLQWLKNGKPVSTAWGTEHAQAVAHSVLVMTVRPEDHGARLSCQSYNSVSAGTQERSITLQVTFPPSAITILGSVSQSENKNVTLCCLTKSSRPRVLLRWWLGGRQLLPTDETVMDGLHGGHISMSNLTFLVRREDNGLPLTCEAFSDAFSKETFKKSLTLNVKYPAQKLWIEGPPEGQYIRTGTRVRLVCLAIGGNPDPSLIWFKDSRPVSEPRQPQEPRRVQLGSVEKSGSTFSRELVLIIGPPDNRAKFSCKAGQLSASTQLVVQFPPTNLTILANSSALRPGDALNLTCVSISSNPPVNLSWDKEGERLEDVAAKPQSAPFKGSAASRSVFLRVSSRDHGQRVTCRAHSEALRETVSSFYRFNVLYPPEFLGEQVRAVTVVEQGQVLLPVSVSANPAPEAFNWTFRGYRLSPAGGPRHRILSGGALQLWNVTRADDGFYQLHCQNSEGTAEALLKLDVHYAPTIRALRDPTEVNVGGSVDIVCTVDANPILPEMFSWERLGEEEEDLNLDDMEKVSKGSTGRLRIRQAKLSQAGAYQCIVDNGVAPAARGLVRLVVRFAPQVDQPTPLTKVAAAGDSTSSATLHCRARGVPNIDFTWTKNGVPLDLQDPRYTEHRYHQGVVHSSLLTIANVSAAQDYALFKCTATNALGSDHTNIQLVSISRPDPPLGLKVVSISPHSVGLEWKPGFDGGLPQRFQIRYEALETPGFLHVDVLPTQATTFTLTGLKPSTRYRIWLLASNALGDSGLTDKGIQVSVTTPGPDQAPEDTDHQLPTELPPGPPRLPLLPVLFAVGGLLLLSNASCVGGLLWRRRLRRLAEEISEKTEAGSEDRIRNEYEESQWTGDRDTRSSTVSTAEVDPNYYSMRDFSPQLPPTLEEVLYHQGAEGEDMAFPGHLHDEVERAYGPPGAWGPLYDEVRMDPYDLRWPEVQCEDPRGIYDQVAADMDAVEASSLPFELRGHLV.

The N-terminal stretch at 1-35 (MGAKRVTVRGARTSPIHRMSSLTPLLLMGMLTSGL) is a signal peptide. Residues 36-1078 (AESPVPTSAP…PGPPRLPLLP (1043 aa)) are Extracellular-facing. Ig-like C2-type domains lie at 39–144 (PVPT…VILS), 149–247 (PKVL…ASFT), 256–347 (PPVI…RSIT), 354–448 (PSAI…KSLT), 454–554 (PAQK…TQLV), and 558–649 (PPTN…ETVS). The N-linked (GlcNAc...) asparagine glycan is linked to Asn54. 3 disulfide bridges follow: Cys67–Cys125, Cys174–Cys231, and Cys279–Cys331. A glycan (N-linked (GlcNAc...) asparagine) is linked at Asn370. An intrachain disulfide couples Cys375 to Cys431. Position 446 is a phosphoserine (Ser446). A disulfide bridge links Cys479 with Cys542. Asn561, Asn578, Asn591, and Asn722 each carry an N-linked (GlcNAc...) asparagine glycan. The cysteines at positions 581 and 637 are disulfide-linked. Ig-like C2-type domains follow at residues 754-846 (PTIR…LVRL) and 852-953 (PQVD…VSIS). 2 cysteine pairs are disulfide-bonded: Cys775-Cys830 and Cys877-Cys934. One can recognise a Fibronectin type-III domain in the interval 957–1052 (PPLGLKVVSI…IQVSVTTPGP (96 aa)). The disordered stretch occupies residues 1043 to 1067 (IQVSVTTPGPDQAPEDTDHQLPTEL). Residues 1079–1099 (VLFAVGGLLLLSNASCVGGLL) form a helical membrane-spanning segment. Topologically, residues 1100-1252 (WRRRLRRLAE…LPFELRGHLV (153 aa)) are cytoplasmic. A Phosphoserine modification is found at Ser1112. Residues 1113 to 1127 (EKTEAGSEDRIRNEY) show a composition bias toward basic and acidic residues. A disordered region spans residues 1113-1144 (EKTEAGSEDRIRNEYEESQWTGDRDTRSSTVS). Thr1115 is modified (phosphothreonine). The residue at position 1119 (Ser1119) is a Phosphoserine. Tyr1204 carries the post-translational modification Phosphotyrosine; by FYN.

The protein belongs to the immunoglobulin superfamily. In terms of assembly, interacts with NPHS2 and with CD2AP (via C-terminal domain). Self-associates (via the Ig-like domains). Also interacts (via the Ig-like domains) with KIRREL1/NEPH1 and KIRREL2; the interaction with KIRREL1 is dependent on KIRREL1 glycosylation. Interacts with KIRREL3. Interacts with MAGI1 (via PDZ 2 and 3 domains) forming a tripartite complex with IGSF5/JAM4. Interacts with DDN; the interaction is direct. Forms a complex with ACTN4, CASK, IQGAP1, MAGI2, SPTAN1 and SPTBN1. Interacts with phosphatidylinositol 3-kinase regulatory subunit PIK3R1; the interaction is reduced by high glucose levels. In terms of processing, phosphorylated at Tyr-1204 by FYN, leading to the recruitment and activation of phospholipase C-gamma-1/PLCG1. Tyrosine phosphorylation is reduced by high glucose levels. Dephosphorylated by tensin TNS2 which leads to reduced binding of NPHN1 to PIK3R1. In terms of tissue distribution, strongly expressed in the podocytes of kidney glomeruli (at protein level) and at lower levels in the spleen.

It localises to the cell membrane. Functionally, seems to play a role in the development or function of the kidney glomerular filtration barrier. Regulates glomerular vascular permeability. May anchor the podocyte slit diaphragm to the actin cytoskeleton. Plays a role in skeletal muscle formation through regulation of myoblast fusion. The polypeptide is Nephrin (Nphs1) (Rattus norvegicus (Rat)).